A 207-amino-acid polypeptide reads, in one-letter code: Dephospho-CoA kinase (207 aa).

The DPCK domain occupies 10 to 207; it reads ILGLTGGIGS…FYLTLSGGQS (198 aa). An ATP-binding site is contributed by 18 to 23; that stretch reads GSGKSA.

This sequence belongs to the CoaE family.

Its subcellular location is the cytoplasm. It carries out the reaction 3'-dephospho-CoA + ATP = ADP + CoA + H(+). Its pathway is cofactor biosynthesis; coenzyme A biosynthesis; CoA from (R)-pantothenate: step 5/5. In terms of biological role, catalyzes the phosphorylation of the 3'-hydroxyl group of dephosphocoenzyme A to form coenzyme A. This Pseudomonas fluorescens (strain Pf0-1) protein is Dephospho-CoA kinase.